The primary structure comprises 310 residues: Junctional adhesion molecule C (310 aa).

Positions 1-29 (MALSRRLRLRLYARLPDFFLLLLFRGCMI) are cleaved as a signal peptide. Residues 30–241 (EAVNLKSSNR…GQDMEVYDLN (212 aa)) are Extracellular-facing. An Ig-like V-type domain is found at 35–127 (KSSNRNPVVH…VALNDRKEVD (93 aa)). Disulfide bonds link cysteine 53–cysteine 115 and cysteine 160–cysteine 219. Asparagine 104 and asparagine 192 each carry an N-linked (GlcNAc...) asparagine glycan. The 98-residue stretch at 139–236 (PVTPVCRIPA…AARCEGQDME (98 aa)) folds into the Ig-like C2-type domain. Residues 242-262 (IAGIIGGVLVVLIVLAVITMG) traverse the membrane as a helical segment. Topologically, residues 263–310 (ICCAYRRGCFISSKQDGESYKSPGKHDGVNYIRTSEEGDFRHKSSFVI) are cytoplasmic. Residues cysteine 264 and cysteine 265 are each lipidated (S-palmitoyl cysteine).

It belongs to the immunoglobulin superfamily. As to quaternary structure, interacts with ITGAM. Interacts with GORASP2. In terms of processing, proteolytically cleaved from endothelial cells surface into a soluble form by ADAM10 and ADAM17; the release of soluble JAM3 is increased by pro-inflammatory factors. Post-translationally, N-glycosylated. S-palmitoylated by ZDHHC7. S-palmitoylation promotes expression at tight junctions. As to expression, colocalizes with Jam2 near the lumen of seminiferous tubulues. Detected at junctional plaques that correspond to cell-cell contacts between spermatids and Sertoli cells. Detected on endothelial cells, in brain vessels and kidney glomeruli (at protein level). Detected in heart, lung, liver, kidney, testis, thymus, lymph node and Peyer patch. Endothelial cells.

It is found in the cell membrane. It localises to the cell junction. The protein resides in the desmosome. Its subcellular location is the tight junction. The protein localises to the secreted. Its function is as follows. Junctional adhesion protein that mediates heterotypic cell-cell interactions with its cognate receptor JAM2 to regulate different cellular processes. Plays a role in homing and mobilization of hematopoietic stem and progenitor cells within the bone marrow. At the surface of bone marrow stromal cells, it contributes to the retention of the hematopoietic stem and progenitor cells expressing JAM3. Plays a central role in leukocytes extravasation by facilitating transmigration through the endothelium. Plays a role in spermatogenesis where JAM2 and JAM3, which are respectively expressed by Sertoli and germ cells, mediate an interaction between both cell types and play an essential role in the anchorage of germ cells onto Sertoli cells and the assembly of cell polarity complexes during spermatid differentiation. Also functions as a counter-receptor for ITGAM, mediating leukocyte-platelet interactions and is involved in the regulation of transepithelial migration of polymorphonuclear neutrophils (PMN). Plays a role in angiogenesis. Plays a role in the regulation of cell migration. During myogenesis, it is involved in myocyte fusion. Promotes chemotaxis of vascular endothelial cells and stimulates angiogenesis. The sequence is that of Junctional adhesion molecule C (Jam3) from Mus musculus (Mouse).